The sequence spans 196 residues: Ribosome maturation factor RimP (196 aa).

This sequence belongs to the RimP family.

The protein resides in the cytoplasm. In terms of biological role, required for maturation of 30S ribosomal subunits. This chain is Ribosome maturation factor RimP, found in Lawsonia intracellularis (strain PHE/MN1-00).